Consider the following 112-residue polypeptide: Frizzy aggregation protein FrzB (112 aa).

Necessary for proper aggregation of cells to form fruiting bodies. FRZ genes define a system of signal transduction analogous to the enterobacterial chemotaxis systems. This is Frizzy aggregation protein FrzB (frzB) from Myxococcus xanthus.